The primary structure comprises 309 residues: MAFRIPFAQDFWNEYLSGRENTIPTLPVVTDITERVIRVLGGNAGPMRLQGTNTYLVGTGRSRILVDTGQGMPSWIRDIAKVLEERDIDISYVLLTHWHGDHTGGVPDLIAYNPALSSRIYKNRPDAGQKDILDGQVFRVEGATLRAVHTPGHAADHMCFLFEEENALFTGDNVLGHGYSVVEDLGQYMNSMVQMANLNLPLGYPAHGAVIDDLPDKMREYIKHREFRVQQVYAILEESRAAGQGRGRGGLTLHEIILAMYGEITDEVEKALAPFLSQVLWKLAEDRKVGFEPGSAAKRRWYVRSRRPN.

Positions 97, 99, 101, and 102 each coordinate Zn(2+). D101 functions as the Proton donor/acceptor in the catalytic mechanism.

This sequence belongs to the metallo-beta-lactamase superfamily. Zn(2+) serves as cofactor.

The catalysed reaction is 2,3,6,8,9-pentahydroxy-1-oxo-3-(2-oxopropyl)-1,2,3,4-tetrahydroanthracene-2-carboxyl-[ACP] + H2O = 2,3,6,8,9-pentahydroxy-1-oxo-3-(2-oxopropyl)-1,2,3,4-tetrahydroanthracene-2-carboxylate + holo-[ACP] + H(+). It functions in the pathway secondary metabolite biosynthesis. In terms of biological role, lactamase-like protein; part of the gene cluster that mediates the biosynthesis of asperthecin, an anthraquinone pigment. Polyketide synthase (PKS) aptA catalyzes the formation of the aromatic polyketide from acetyl coenzyme A and seven malonyl coenzyme A molecules. Polyketide is subsequently hydrolyzed by the action of aptB into endocrocin-9-anthrone. Endocrocin-9-anthrone is then oxidized into endocrocin by aptC. Endocrocin is likely to decarboxylate spontaneously to form emodin which explains why there is no decarboxylase in the asperthecin biosynthesis cluster. Finally, aptC or another endogenous oxygenase catalyzes additional oxidation steps to form asperthecin. This Emericella nidulans (strain FGSC A4 / ATCC 38163 / CBS 112.46 / NRRL 194 / M139) (Aspergillus nidulans) protein is Lactamase-like protein aptB.